Reading from the N-terminus, the 164-residue chain is Lipoprotein signal peptidase (164 aa).

A run of 3 helical transmembrane segments spans residues 12-32 (WLWL…LILQ), 70-90 (WFFA…MYRS), and 102-122 (ALII…GFVV). Catalysis depends on residues Asp123 and Asp141. Residues 137–157 (FNLADTAICVGAALIVLEGFL) form a helical membrane-spanning segment.

Belongs to the peptidase A8 family.

The protein localises to the cell inner membrane. The enzyme catalyses Release of signal peptides from bacterial membrane prolipoproteins. Hydrolyzes -Xaa-Yaa-Zaa-|-(S,diacylglyceryl)Cys-, in which Xaa is hydrophobic (preferably Leu), and Yaa (Ala or Ser) and Zaa (Gly or Ala) have small, neutral side chains.. It participates in protein modification; lipoprotein biosynthesis (signal peptide cleavage). Its function is as follows. This protein specifically catalyzes the removal of signal peptides from prolipoproteins. This chain is Lipoprotein signal peptidase, found in Escherichia coli O6:K15:H31 (strain 536 / UPEC).